The following is a 32-amino-acid chain: Fibrinolytic enzyme (32 aa).

In terms of processing, the N-terminus is blocked.

Its activity is regulated as follows. Inhibited by phenylmethanesulfonyl fluoride (PMSF). Not inhibited by EDTA, EGTA, beta-mercaptoethanol, indoacetamide, benzamidine, aprotinin, pepstatin A and trypsin inhibitor. In terms of biological role, plasmin-like serine protease. Has fibrinolytic and fibrinogenolytic but not plasminogenolytic activity. Cleaves after Arg and Lys residues. The sequence is that of Fibrinolytic enzyme from Hediste japonica (Polychaete worm).